The sequence spans 311 residues: MKITIFGGGAWGQALAFAFAQKNEVQIVSRRNISTALMPLNEILNKNSHRIILQSSLEESLNSELFVIAISVQALREWFIRARLNQNSKILIASKGIEEKTGIFVSQIAKKFISLENLCFLAGPSFAKEIILGLPCALAIHSCNPILAQKFANQMPSFIKPYIEDDIIGGEVASAYKNVIAIAGGICDGLNLGQNAKASLLSRGLVEMCKFGEYFGAKMQTFLGLSGAGDLFLTANSLLSRNYRVGLGLAQNNRLEDILRDLGEVAEGIKTSQAITQISEKEGIYTPIATEIQKIIQGKSPLESMSTLMKK.

Trp-11, Arg-30, Arg-31, and Lys-95 together coordinate NADPH. Sn-glycerol 3-phosphate is bound by residues Lys-95, Gly-123, and Ser-125. An NADPH-binding site is contributed by Ala-127. Lys-177, Asp-230, Ser-240, Arg-241, and Asn-242 together coordinate sn-glycerol 3-phosphate. Catalysis depends on Lys-177, which acts as the Proton acceptor. Arg-241 is a binding site for NADPH. NADPH-binding residues include Val-265 and Glu-267.

The protein belongs to the NAD-dependent glycerol-3-phosphate dehydrogenase family.

Its subcellular location is the cytoplasm. It carries out the reaction sn-glycerol 3-phosphate + NAD(+) = dihydroxyacetone phosphate + NADH + H(+). It catalyses the reaction sn-glycerol 3-phosphate + NADP(+) = dihydroxyacetone phosphate + NADPH + H(+). It functions in the pathway membrane lipid metabolism; glycerophospholipid metabolism. In terms of biological role, catalyzes the reduction of the glycolytic intermediate dihydroxyacetone phosphate (DHAP) to sn-glycerol 3-phosphate (G3P), the key precursor for phospholipid synthesis. The polypeptide is Glycerol-3-phosphate dehydrogenase [NAD(P)+] (Bartonella bacilliformis (strain ATCC 35685 / KC583 / Herrer 020/F12,63)).